The chain runs to 321 residues: Replication factor C small subunit (321 aa).

46–53 contacts ATP; it reads GPAGVGKT.

It belongs to the activator 1 small subunits family. RfcS subfamily. In terms of assembly, heterohexamer composed of four small subunits (RfcS) and two large subunits (RfcL).

In terms of biological role, part of the RFC clamp loader complex which loads the PCNA sliding clamp onto DNA. The complex possesses DNA-dependent ATPase activity which is further stimulated by PCNA. In conjunction with PCNA stimulates DNA synthesis by PolB, relieving inhibition by replication protein A (RPA). The sequence is that of Replication factor C small subunit (rfcS) from Methanothermobacter thermautotrophicus (strain ATCC 29096 / DSM 1053 / JCM 10044 / NBRC 100330 / Delta H) (Methanobacterium thermoautotrophicum).